The primary structure comprises 377 residues: Chaperone protein DnaJ (377 aa).

A J domain is found at 5–70 (DYYELLGLQK…EKKAKYDQFG (66 aa)). A CR-type zinc finger spans residues 137-219 (GVEKEISVTR…CRGKGSVRKT (83 aa)). Residues C150, C153, C167, C170, C193, C196, C207, and C210 each contribute to the Zn(2+) site. 4 CXXCXGXG motif repeats span residues 150–157 (CEHCHGSG), 167–174 (CPTCSGSG), 193–200 (CDTCRGTG), and 207–214 (CSECRGKG).

Belongs to the DnaJ family. In terms of assembly, homodimer. Zn(2+) serves as cofactor.

It is found in the cytoplasm. Participates actively in the response to hyperosmotic and heat shock by preventing the aggregation of stress-denatured proteins and by disaggregating proteins, also in an autonomous, DnaK-independent fashion. Unfolded proteins bind initially to DnaJ; upon interaction with the DnaJ-bound protein, DnaK hydrolyzes its bound ATP, resulting in the formation of a stable complex. GrpE releases ADP from DnaK; ATP binding to DnaK triggers the release of the substrate protein, thus completing the reaction cycle. Several rounds of ATP-dependent interactions between DnaJ, DnaK and GrpE are required for fully efficient folding. Also involved, together with DnaK and GrpE, in the DNA replication of plasmids through activation of initiation proteins. The chain is Chaperone protein DnaJ from Clostridium beijerinckii (strain ATCC 51743 / NCIMB 8052) (Clostridium acetobutylicum).